A 430-amino-acid polypeptide reads, in one-letter code: C4-dicarboxylate transport protein (430 aa).

Transmembrane regions (helical) follow at residues 9–29, 45–65, 79–99, 149–169, 185–205, 223–243, 308–328, and 356–376; these read VLYVQVIFAIIVGVILGHFYP, LIKMVIGPIIFCTVVTGIAGM, LLYFEIVSTFALLLGLAATHL, GEILQILLIALLFGSVLAHLG, VLFGIVHIVTKLAPIGAFGAM, LIGTFYLTSVVFVLVVLGAIA, IYMTMAVLFIAQATNIELTWM, and AATLAVVPTIPLSGMVLILGI.

This sequence belongs to the dicarboxylate/amino acid:cation symporter (DAACS) (TC 2.A.23) family.

Its subcellular location is the cell inner membrane. Functionally, responsible for the transport of dicarboxylates such as succinate, fumarate, and malate from the periplasm across the membrane. The sequence is that of C4-dicarboxylate transport protein from Burkholderia orbicola (strain AU 1054).